Consider the following 102-residue polypeptide: Putative defensin-like protein 298 (102 aa).

An N-terminal signal peptide occupies residues 1-29 (MSASKATMLILFALFLSDILLVSIPRAEA). 6 disulfide bridges follow: C35/C53, C41/C58, C46/C60, C74/C93, C80/C98, and C86/C100.

This sequence belongs to the DEFL family.

It localises to the secreted. The chain is Putative defensin-like protein 298 from Arabidopsis thaliana (Mouse-ear cress).